A 361-amino-acid polypeptide reads, in one-letter code: D-alanine--D-alanine ligase (361 aa).

The region spanning 134-344 (KILAQRAGVP…YTDLITKLID (211 aa)) is the ATP-grasp domain. 169 to 224 (ASQLGSDLFVKPSNQGSSVGVSHVTNEKEYKVALAEAFKYDDKVLVEETVHGTEVE) is a binding site for ATP. Mg(2+) contacts are provided by Asp297, Glu311, and Asn313.

Belongs to the D-alanine--D-alanine ligase family. The cofactor is Mg(2+). Mn(2+) is required as a cofactor.

Its subcellular location is the cytoplasm. The catalysed reaction is 2 D-alanine + ATP = D-alanyl-D-alanine + ADP + phosphate + H(+). The protein operates within cell wall biogenesis; peptidoglycan biosynthesis. Its function is as follows. Cell wall formation. The polypeptide is D-alanine--D-alanine ligase (Lactobacillus johnsonii (strain CNCM I-12250 / La1 / NCC 533)).